The following is a 314-amino-acid chain: MSTFRQAVQEYIEMRRGLGFKLRETERGLIDFAAFLEANDTPHITTELALAWAQRPSRAQPSHWATRLGYVRVFARYRAAADPRTQIPPSGLLPFRPKRARPYLYSKEDIQRLLSAALEMPCRYTRCKLRPWTYYCLFGLLSVSGLRLGEARNLKLADVDFDAAVLTIRGTKFGKSRLVPMHASTCAVLRDYLKRRRQHCAAQAASPYLFTSQLGNRLDVGDIHRTFYALSRQIGLRGATDSHGPRLHDMRHVFATNTLVRWYEAEQDPERLLPILSTYLGHVHVADTQWYLTGSPELMKEAMRRLERRWEDRT.

The region spanning 2 to 79 is the Core-binding (CB) domain; the sequence is STFRQAVQEY…YVRVFARYRA (78 aa). A Tyr recombinase domain is found at 100 to 304; it reads ARPYLYSKED…SPELMKEAMR (205 aa). Catalysis depends on residues Arg-147, Lys-172, His-248, Arg-251, and His-282. Tyr-291 (O-(3'-phospho-DNA)-tyrosine intermediate) is an active-site residue.

It belongs to the 'phage' integrase family.

The polypeptide is Putative integrase/recombinase y4rB (Sinorhizobium fredii (strain NBRC 101917 / NGR234)).